Consider the following 542-residue polypeptide: Protein MGF 505-11L (542 aa).

Belongs to the asfivirus MGF 505 family.

Functionally, plays a role in virus cell tropism, and may be required for efficient virus replication in macrophages. This African swine fever virus (isolate Tick/Malawi/Lil 20-1/1983) (ASFV) protein is Protein MGF 505-11L.